The chain runs to 434 residues: Fez family zinc finger protein 2 (434 aa).

The short motif at 27–42 is the Engrailed homology 1 repressor element; that stretch reads SLAFSIERIMAKTSEP. C2H2-type zinc fingers lie at residues 253–275, 281–303, 309–331, 337–359, 365–387, and 393–416; these read FTCE…MPVH, FVCK…KIIH, HKCN…IRIH, FVCE…KLTH, YKCS…MHTH, and FTCA…RKLH.

Belongs to the krueppel C2H2-type zinc-finger protein family.

The protein resides in the nucleus. Its function is as follows. Transcription repressor. Component of the regulatory cascade that controls the development of dopaminergic (DA) and serotonergic (5HT) neurons. In Xenopus laevis (African clawed frog), this protein is Fez family zinc finger protein 2 (fezf2).